The primary structure comprises 597 residues: MDDYFSAEEEACYYSSDQDSLDGIDNEESELQPLSSKRSNTQVITQESLLAAQREDLLRVMELLSIKEHHARTLLIHYQWDVEKLFAVFVEKGKDSLFSGAGVTVFDYQYGNSSFPQSSQMSCDVCMEDLPGDHMTRMDCGHCFCNNCWTEHFTVQINEGQSKRIRCMAHQCNAICDEDIVRSLVSKKRPDLAAKFDRYLLESYIEDNRMVKWCPSTPHCGNAIRAEDDKLCEVECSCGLQFCFSCLCQAHSPCSCLMWELWRKKCRDESETINWITVHTKLCPKCYKPVEKNGGCNLVRCICGQCFCWLCGGATGSDHTYRSIAGHSCGRYQDDKEKQMERAKRDLNRYTHYHHRYKAHTDSSKLEDKLRDTIHEKVSKSEKRELKLKDFSWVTNGLDRLFRSRRVLSYSYAFAYYMFGEEMFKDEMTPEEREIKKNLFEDQQQQLESNVEKLSQFLEEPFDEFSNDKVMAIRIQIINLSVAVDTLCKKMYECIENDLLGSLQLGIHNISPYRSKGIEQAAQFYASWNSKDADKFQPLDSGTSGVTSRPEQASGSRSSEDTICSSSQKRPKKEGSFLNNKVTLLDLNLPADFVDQN.

Residues 119 to 333 form a TRIAD supradomain region; sequence SQMSCDVCME…IAGHSCGRYQ (215 aa). Residues cysteine 123, cysteine 126, cysteine 140, histidine 142, cysteine 145, cysteine 148, cysteine 167, cysteine 172, cysteine 214, cysteine 220, cysteine 236, cysteine 238, cysteine 243, cysteine 246, histidine 251, cysteine 256, cysteine 283, and cysteine 286 each contribute to the Zn(2+) site. The RING-type 1 zinc finger occupies 123 to 172; that stretch reads CDVCMEDLPGDHMTRMDCGHCFCNNCWTEHFTVQINEGQSKRIRCMAHQC. The IBR-type zinc finger occupies 194-256; that stretch reads AKFDRYLLES…LCQAHSPCSC (63 aa). Residues 283–311 form an RING-type 2; atypical zinc finger; it reads CPKCYKPVEKNGGCNLVRCICGQCFCWLC. Cysteine 296 is an active-site residue. Residues cysteine 301, cysteine 303, cysteine 308, cysteine 311, histidine 319, and cysteine 329 each contribute to the Zn(2+) site. Positions 536 to 575 are disordered; that stretch reads FQPLDSGTSGVTSRPEQASGSRSSEDTICSSSQKRPKKEG. Polar residues predominate over residues 540-568; the sequence is DSGTSGVTSRPEQASGSRSSEDTICSSSQ.

Belongs to the RBR family. Ariadne subfamily. Requires Zn(2+) as cofactor. As to expression, ubiquitous.

It catalyses the reaction [E2 ubiquitin-conjugating enzyme]-S-ubiquitinyl-L-cysteine + [acceptor protein]-L-lysine = [E2 ubiquitin-conjugating enzyme]-L-cysteine + [acceptor protein]-N(6)-ubiquitinyl-L-lysine.. It functions in the pathway protein modification; protein ubiquitination. Might act as an E3 ubiquitin-protein ligase, or as part of E3 complex, which accepts ubiquitin from specific E2 ubiquitin-conjugating enzymes and then transfers it to substrates. This chain is Probable E3 ubiquitin-protein ligase ARI1 (ARI1), found in Arabidopsis thaliana (Mouse-ear cress).